We begin with the raw amino-acid sequence, 229 residues long: Lytic polysaccharide monooxygenase-like protein ham-7 (229 aa).

Residues methionine 1 to alanine 17 form the signal peptide. Residue histidine 18 coordinates Cu(2+). Disulfide bonds link cysteine 47-cysteine 157 and cysteine 122-cysteine 178. N-linked (GlcNAc...) asparagine glycans are attached at residues asparagine 55, asparagine 98, asparagine 139, asparagine 174, and asparagine 180. Serine 206 carries the GPI-anchor amidated serine lipid modification. Residues alanine 207–leucine 229 constitute a propeptide, removed in mature form.

This sequence belongs to the X325 family. Cu(2+) is required as a cofactor.

It localises to the cell membrane. Lytic polysaccharide monooxygenase-like protein that has diverged to biological functions other than polysaccharide degradation since it does not perform oxidative cleavage of polysaccharides. Acts as the major cell wall sensor that regulates MAK-1-dependent hyphal anastomosis, the fusion of hyphal cells. May also act as a cell surface-bound protein that functions in the copper-accumulation pathway. The chain is Lytic polysaccharide monooxygenase-like protein ham-7 from Neurospora crassa (strain ATCC 24698 / 74-OR23-1A / CBS 708.71 / DSM 1257 / FGSC 987).